The sequence spans 173 residues: Co-chaperone protein HscB homolog (173 aa).

A J domain is found at 5–77 (CHFALFDLQP…PRRARYLLAI (73 aa)).

This sequence belongs to the HscB family. As to quaternary structure, interacts with HscA and stimulates its ATPase activity.

Co-chaperone involved in the maturation of iron-sulfur cluster-containing proteins. Seems to help targeting proteins to be folded toward HscA. In Pseudomonas putida (strain W619), this protein is Co-chaperone protein HscB homolog.